The chain runs to 146 residues: MVKKVLLINGPNLNLLGTREPEKYGTTSLKDIEQAGRDQADSKKDGSELQVFQSNTEGFIVDRIHKAKQDGVGFIVINAGAYTHTSVAIRDALLGTAIPFIEVHITNVHQREPFRHQSYLSDKAVAVVCGLGVYGYTASIEYALNY.

Y24 functions as the Proton acceptor in the catalytic mechanism. 3 residues coordinate substrate: N78, H84, and D91. The active-site Proton donor is the H104. Substrate-binding positions include 105–106 (IT) and R115.

This sequence belongs to the type-II 3-dehydroquinase family. As to quaternary structure, homododecamer. Adopts a ring-like structure, composed of an arrangement of two hexameric rings stacked on top of one another.

It carries out the reaction 3-dehydroquinate = 3-dehydroshikimate + H2O. It functions in the pathway aromatic compound metabolism; 3,4-dihydroxybenzoate biosynthesis; 3,4-dihydroxybenzoate from 3-dehydroquinate: step 1/2. Is involved in the catabolism of quinate. Allows the utilization of quinate as carbon source via the beta-ketoadipate pathway. The sequence is that of Catabolic 3-dehydroquinase from Meyerozyma guilliermondii (strain ATCC 6260 / CBS 566 / DSM 6381 / JCM 1539 / NBRC 10279 / NRRL Y-324) (Yeast).